Reading from the N-terminus, the 501-residue chain is Cytochrome P450 monooxygenase notH (501 aa).

The chain crosses the membrane as a helical span at residues 11–31 (LGLESVGWVLGLLTTSILYLF). The N-linked (GlcNAc...) asparagine glycan is linked to Asn298. Cys442 lines the heme pocket.

This sequence belongs to the cytochrome P450 family. Heme serves as cofactor.

The protein localises to the membrane. It participates in alkaloid biosynthesis. Cytochrome P450 monooxygenase; part of the gene cluster that mediates the biosynthesis of notoamide, a fungal indole alkaloid that belongs to a family of natural products containing a characteristic bicyclo[2.2.2]diazaoctane core. The first step of notoamide biosynthesis involves coupling of L-proline and L-tryptophan by the bimodular NRPS notE, to produce cyclo-L-tryptophan-L-proline called brevianamide F. The reverse prenyltransferase notF then acts as a deoxybrevianamide E synthase and converts brevianamide F to deoxybrevianamide E via reverse prenylation at C-2 of the indole ring leading to the bicyclo[2.2.2]diazaoctane core. Deoxybrevianamide E is further hydroxylated at C-6 of the indole ring, likely catalyzed by the cytochrome P450 monooxygenase notG, to yield 6-hydroxy-deoxybrevianamide E. 6-hydroxy-deoxybrevianamide E is a specific substrate of the prenyltransferase notC for normal prenylation at C-7 to produce 6-hydroxy-7-prenyl-deoxybrevianamide, also called notoamide S. As the proposed pivotal branching point in notoamide biosynthesis, notoamide S can be diverted to notoamide E through an oxidative pyran ring closure putatively catalyzed by either notH cytochrome P450 monooxygenase or the notD FAD-linked oxidoreductase. This step would be followed by an indole 2,3-epoxidation-initiated pinacol-like rearrangement catalyzed by the notB FAD-dependent monooxygenase leading to the formation of notoamide C and notoamide D. On the other hand notoamide S is converted to notoamide T by notH (or notD), a bifunctional oxidase that also functions as the intramolecular Diels-Alderase responsible for generation of (+)-notoamide T. To generate antipodal (-)-notoaminide T, notH' (or notD') in Aspergillus versicolor is expected to catalyze a Diels-Alder reaction leading to the opposite stereochemistry. The remaining oxidoreductase notD (or notH) likely catalyzes the oxidative pyran ring formation to yield (+)-stephacidin A. The FAD-dependent monooxygenase notI is highly similar to notB and is predicted to catalyze a similar conversion from (+)-stephacidin A to (-)-notoamide B via the 2,3-epoxidation of (+)-stephacidin A followed by a pinacol-type rearrangement. Finally, it remains unclear which enzyme could be responsible for the final hydroxylation steps leading to notoamide A and sclerotiamide. In Aspergillus sp. (strain MF297-2), this protein is Cytochrome P450 monooxygenase notH.